Here is a 541-residue protein sequence, read N- to C-terminus: Arginine--tRNA ligase (541 aa).

The 'HIGH' region signature appears at 119–129 (ANPTGPLHIGH).

The protein belongs to the class-I aminoacyl-tRNA synthetase family. In terms of assembly, monomer.

The protein localises to the cytoplasm. It carries out the reaction tRNA(Arg) + L-arginine + ATP = L-arginyl-tRNA(Arg) + AMP + diphosphate. This is Arginine--tRNA ligase from Helicobacter pylori (strain P12).